Reading from the N-terminus, the 208-residue chain is Urease accessory protein UreG 1 (208 aa).

Residue 14–21 (GPVGSGKT) participates in GTP binding.

The protein belongs to the SIMIBI class G3E GTPase family. UreG subfamily. In terms of assembly, homodimer. UreD, UreF and UreG form a complex that acts as a GTP-hydrolysis-dependent molecular chaperone, activating the urease apoprotein by helping to assemble the nickel containing metallocenter of UreC. The UreE protein probably delivers the nickel.

The protein localises to the cytoplasm. Functionally, facilitates the functional incorporation of the urease nickel metallocenter. This process requires GTP hydrolysis, probably effectuated by UreG. This Brucella ovis (strain ATCC 25840 / 63/290 / NCTC 10512) protein is Urease accessory protein UreG 1.